A 179-amino-acid chain; its full sequence is Ribosome maturation factor RimM (179 aa).

In terms of domain architecture, PRC barrel spans 102–179 (DGEYYWYQLE…EMKVEWDADF (78 aa)).

The protein belongs to the RimM family. Binds ribosomal protein uS19.

The protein resides in the cytoplasm. Its function is as follows. An accessory protein needed during the final step in the assembly of 30S ribosomal subunit, possibly for assembly of the head region. Essential for efficient processing of 16S rRNA. May be needed both before and after RbfA during the maturation of 16S rRNA. It has affinity for free ribosomal 30S subunits but not for 70S ribosomes. This is Ribosome maturation factor RimM from Pseudomonas syringae pv. tomato (strain ATCC BAA-871 / DC3000).